The primary structure comprises 362 residues: Phosphoserine aminotransferase (362 aa).

Arginine 43 is an L-glutamate binding site. Pyridoxal 5'-phosphate-binding positions include 77–78, tryptophan 103, threonine 153, aspartate 173, and glutamine 196; that span reads AT. At lysine 197 the chain carries N6-(pyridoxal phosphate)lysine. 238–239 serves as a coordination point for pyridoxal 5'-phosphate; sequence NT.

It belongs to the class-V pyridoxal-phosphate-dependent aminotransferase family. SerC subfamily. In terms of assembly, homodimer. It depends on pyridoxal 5'-phosphate as a cofactor.

The protein localises to the cytoplasm. The enzyme catalyses O-phospho-L-serine + 2-oxoglutarate = 3-phosphooxypyruvate + L-glutamate. The catalysed reaction is 4-(phosphooxy)-L-threonine + 2-oxoglutarate = (R)-3-hydroxy-2-oxo-4-phosphooxybutanoate + L-glutamate. It participates in amino-acid biosynthesis; L-serine biosynthesis; L-serine from 3-phospho-D-glycerate: step 2/3. It functions in the pathway cofactor biosynthesis; pyridoxine 5'-phosphate biosynthesis; pyridoxine 5'-phosphate from D-erythrose 4-phosphate: step 3/5. Catalyzes the reversible conversion of 3-phosphohydroxypyruvate to phosphoserine and of 3-hydroxy-2-oxo-4-phosphonooxybutanoate to phosphohydroxythreonine. The protein is Phosphoserine aminotransferase of Xylella fastidiosa (strain Temecula1 / ATCC 700964).